The primary structure comprises 201 residues: 3-isopropylmalate dehydratase small subunit (201 aa).

This sequence belongs to the LeuD family. LeuD type 1 subfamily. In terms of assembly, heterodimer of LeuC and LeuD.

The catalysed reaction is (2R,3S)-3-isopropylmalate = (2S)-2-isopropylmalate. It participates in amino-acid biosynthesis; L-leucine biosynthesis; L-leucine from 3-methyl-2-oxobutanoate: step 2/4. Its function is as follows. Catalyzes the isomerization between 2-isopropylmalate and 3-isopropylmalate, via the formation of 2-isopropylmaleate. The protein is 3-isopropylmalate dehydratase small subunit of Xanthobacter autotrophicus (strain ATCC BAA-1158 / Py2).